The chain runs to 123 residues: Large ribosomal subunit protein uL14 (123 aa).

The protein belongs to the universal ribosomal protein uL14 family. As to quaternary structure, part of the 50S ribosomal subunit. Forms a cluster with proteins L3 and L19. In the 70S ribosome, L14 and L19 interact and together make contacts with the 16S rRNA in bridges B5 and B8.

Its function is as follows. Binds to 23S rRNA. Forms part of two intersubunit bridges in the 70S ribosome. The sequence is that of Large ribosomal subunit protein uL14 from Blochmanniella floridana.